Reading from the N-terminus, the 840-residue chain is Sorting nexin-25 (840 aa).

A PXA domain is found at 1-164 (MDKALKEVFD…MLLAQLAYRE (164 aa)). The RGS domain occupies 287–401 (QFEDILANTF…IVSDLYEKLL (115 aa)). Residues 434–499 (TNQINEQASF…RTDLQLHMAR (66 aa)) adopt a coiled-coil conformation. One can recognise a PX domain in the interval 508–628 (GMWKASITSG…AFLSPSPDYL (121 aa)). Serine 665 carries the post-translational modification Phosphoserine.

This sequence belongs to the sorting nexin family.

It localises to the endosome membrane. May be involved in several stages of intracellular trafficking. This Homo sapiens (Human) protein is Sorting nexin-25 (SNX25).